Consider the following 197-residue polypeptide: 7-methyl-GTP pyrophosphatase (197 aa).

The active-site Proton acceptor is Asp-79.

Belongs to the Maf family. YceF subfamily.

The protein localises to the cytoplasm. The enzyme catalyses N(7)-methyl-GTP + H2O = N(7)-methyl-GMP + diphosphate + H(+). Its function is as follows. Nucleoside triphosphate pyrophosphatase that hydrolyzes 7-methyl-GTP (m(7)GTP). May have a dual role in cell division arrest and in preventing the incorporation of modified nucleotides into cellular nucleic acids. This chain is 7-methyl-GTP pyrophosphatase, found in Dictyostelium discoideum (Social amoeba).